The following is a 306-amino-acid chain: Ribonuclease Z (306 aa).

Positions 61, 63, 65, 66, 137, 207, and 263 each coordinate Zn(2+). The active-site Proton acceptor is the Asp-65.

Belongs to the RNase Z family. As to quaternary structure, homodimer. Requires Zn(2+) as cofactor.

It carries out the reaction Endonucleolytic cleavage of RNA, removing extra 3' nucleotides from tRNA precursor, generating 3' termini of tRNAs. A 3'-hydroxy group is left at the tRNA terminus and a 5'-phosphoryl group is left at the trailer molecule.. In terms of biological role, zinc phosphodiesterase, which displays some tRNA 3'-processing endonuclease activity. Probably involved in tRNA maturation, by removing a 3'-trailer from precursor tRNA. The sequence is that of Ribonuclease Z from Thermococcus sibiricus (strain DSM 12597 / MM 739).